We begin with the raw amino-acid sequence, 147 residues long: Large ribosomal subunit protein uL13 (147 aa).

This sequence belongs to the universal ribosomal protein uL13 family. In terms of assembly, part of the 50S ribosomal subunit.

This protein is one of the early assembly proteins of the 50S ribosomal subunit, although it is not seen to bind rRNA by itself. It is important during the early stages of 50S assembly. The chain is Large ribosomal subunit protein uL13 from Mycobacterium marinum (strain ATCC BAA-535 / M).